The following is a 570-amino-acid chain: Mitogen-activated protein kinase 11 (570 aa).

A Protein kinase domain is found at 26–317 (YEVLEVIGKG…AQEALADPYF (292 aa)). ATP-binding positions include 32–40 (IGKGSYGLV) and Lys-55. Asp-152 functions as the Proton acceptor in the catalytic mechanism. Thr-188 carries the post-translational modification Phosphothreonine. The short motif at 188-190 (TDY) is the TXY element. Tyr-190 carries the post-translational modification Phosphotyrosine.

Belongs to the protein kinase superfamily. CMGC Ser/Thr protein kinase family. MAP kinase subfamily. Dually phosphorylated on Thr-188 and Tyr-190, which activates the enzyme.

The catalysed reaction is L-seryl-[protein] + ATP = O-phospho-L-seryl-[protein] + ADP + H(+). It catalyses the reaction L-threonyl-[protein] + ATP = O-phospho-L-threonyl-[protein] + ADP + H(+). Activated by threonine and tyrosine phosphorylation. This is Mitogen-activated protein kinase 11 (MPK11) from Oryza sativa subsp. japonica (Rice).